The chain runs to 442 residues: UDP-glycosyltransferase 78D4 (442 aa).

UDP-alpha-D-glucose-binding positions include Ala-322 to Gln-324, His-339 to Glu-347, and Phe-361 to His-364.

Belongs to the UDP-glycosyltransferase family.

This Arabidopsis thaliana (Mouse-ear cress) protein is UDP-glycosyltransferase 78D4 (UGT78D4).